The chain runs to 340 residues: GTP 3',8-cyclase (340 aa).

The Radical SAM core domain maps to 20–246 (RFERQYVYLR…PKALSDGPAK (227 aa)). R29 is a binding site for GTP. [4Fe-4S] cluster is bound by residues C36 and C40. Y42 contributes to the S-adenosyl-L-methionine binding site. C43 serves as a coordination point for [4Fe-4S] cluster. R79 serves as a coordination point for GTP. An S-adenosyl-L-methionine-binding site is contributed by G83. T110 contacts GTP. S134 contributes to the S-adenosyl-L-methionine binding site. K171 provides a ligand contact to GTP. M205 lines the S-adenosyl-L-methionine pocket. [4Fe-4S] cluster contacts are provided by C268 and C271. 273-275 (RLR) contacts GTP. Position 285 (C285) interacts with [4Fe-4S] cluster.

This sequence belongs to the radical SAM superfamily. MoaA family. Monomer and homodimer. It depends on [4Fe-4S] cluster as a cofactor.

The catalysed reaction is GTP + AH2 + S-adenosyl-L-methionine = (8S)-3',8-cyclo-7,8-dihydroguanosine 5'-triphosphate + 5'-deoxyadenosine + L-methionine + A + H(+). It participates in cofactor biosynthesis; molybdopterin biosynthesis. Catalyzes the cyclization of GTP to (8S)-3',8-cyclo-7,8-dihydroguanosine 5'-triphosphate. This is GTP 3',8-cyclase from Actinobacillus pleuropneumoniae serotype 5b (strain L20).